Reading from the N-terminus, the 1091-residue chain is E3 ubiquitin-protein ligase TRIM33 (1091 aa).

Residues 1-13 show a composition bias toward gly residues; the sequence is MADNKGGGGGGGE. A disordered region spans residues 1 to 87; it reads MADNKGGGGG…SATPASSSSS (87 aa). Positions 52 to 87 are enriched in low complexity; sequence APVAAVPTDTPAEENPAPSSSSVASSSATPASSSSS. The RING-type 1 zinc finger occupies 97–154; it reads CAVCKLSLQSRDTEPKLLPCLHSFCRRCLPEPERQLSVPGGTNGDIQQVGVIRCLVCR. Residues 180–227 form a B box-type 1; atypical zinc finger; that stretch reads KSEQVCTSCEDNASAVGFCVECGEWLCKTCIEAHQRVKFTKDHIITNK. The Zn(2+) site is built by Cys185, Cys188, Cys209, His213, Cys245, His248, Cys268, and His273. The B box-type 2 zinc-finger motif lies at 240–281; sequence QRPVFCPVHKQEQLKLFCETCDRLTCRDCQLLEHKEHRYQFL. Residues 269 to 361 adopt a coiled-coil conformation; that stretch reads QLLEHKEHRY…QLESVTKERQ (93 aa). Disordered stretches follow at residues 672-779 and 821-844; these read LPQP…TPPL and GKSAVRNSMHRPPRGGGGGDGSNK. Residues 675 to 721 are compositionally biased toward low complexity; it reads PTSNMNPSPAPSAMSPGSTGLSNSHTPVRPPSTSSTGSRGSCGSSSR. Over residues 754–763 the composition is skewed to basic and acidic residues; that stretch reads KQEKAEDGRR. Over residues 768 to 779 the composition is skewed to low complexity; sequence LSSPESSLTPPL. Residues 850 to 897 form a PHD-type zinc finger; the sequence is EDWCAVCQNGGDLLCCEKCPKVFHLTCHVPTLLSFPSGEWICTFCRDL. The region spanning 920-1043 is the Bromo domain; that stretch reads GLSPVDQMKC…LYFEEKLPAI (124 aa). The segment at 1051–1091 is disordered; sequence PLPEFEAEDDDGDVTDDSDDDDFVQPRRKRLKSEERPVHIK. Positions 1055 to 1073 are enriched in acidic residues; sequence FEAEDDDGDVTDDSDDDDF. The span at 1082-1091 shows a compositional bias: basic and acidic residues; it reads KSEERPVHIK.

As to quaternary structure, may interact with smad4.

The protein localises to the nucleus. It catalyses the reaction S-ubiquitinyl-[E2 ubiquitin-conjugating enzyme]-L-cysteine + [acceptor protein]-L-lysine = [E2 ubiquitin-conjugating enzyme]-L-cysteine + N(6)-ubiquitinyl-[acceptor protein]-L-lysine.. Its pathway is protein modification; protein ubiquitination. Its function is as follows. Acts as an E3 ubiquitin-protein ligase for smad4. Promotes ectoderm embryonic development at the expense of other germ layers. Inhibits mesodermal differentiation. Promotes neural development of the ectoderm. Promotes smad4 alpha degradation via the ubiquitin proteasome pathway. May act as a transcriptional repressor. The chain is E3 ubiquitin-protein ligase TRIM33 (trim33) from Xenopus laevis (African clawed frog).